A 247-amino-acid polypeptide reads, in one-letter code: Carboxy-S-adenosyl-L-methionine synthase (247 aa).

S-adenosyl-L-methionine is bound by residues Tyr-39, 64-66, 89-90, 117-118, Asn-132, and Arg-199; these read GCS, DN, and DI.

This sequence belongs to the class I-like SAM-binding methyltransferase superfamily. Cx-SAM synthase family. Homodimer.

It carries out the reaction prephenate + S-adenosyl-L-methionine = carboxy-S-adenosyl-L-methionine + 3-phenylpyruvate + H2O. Catalyzes the conversion of S-adenosyl-L-methionine (SAM) to carboxy-S-adenosyl-L-methionine (Cx-SAM). The sequence is that of Carboxy-S-adenosyl-L-methionine synthase from Citrobacter koseri (strain ATCC BAA-895 / CDC 4225-83 / SGSC4696).